The primary structure comprises 335 residues: Tetraacyldisaccharide 4'-kinase (335 aa).

Residue 59–66 coordinates ATP; sequence TAGGNGKT.

Belongs to the LpxK family.

It catalyses the reaction a lipid A disaccharide + ATP = a lipid IVA + ADP + H(+). It participates in glycolipid biosynthesis; lipid IV(A) biosynthesis; lipid IV(A) from (3R)-3-hydroxytetradecanoyl-[acyl-carrier-protein] and UDP-N-acetyl-alpha-D-glucosamine: step 6/6. Transfers the gamma-phosphate of ATP to the 4'-position of a tetraacyldisaccharide 1-phosphate intermediate (termed DS-1-P) to form tetraacyldisaccharide 1,4'-bis-phosphate (lipid IVA). The chain is Tetraacyldisaccharide 4'-kinase from Vibrio cholerae serotype O1 (strain ATCC 39541 / Classical Ogawa 395 / O395).